A 259-amino-acid polypeptide reads, in one-letter code: Small ribosomal subunit protein eS1 (259 aa).

Disordered regions lie at residues Met1–Asp23 and Glu235–Val259. Over residues Lys8–Lys19 the composition is skewed to basic residues. Residues Ser246–Val259 show a composition bias toward basic and acidic residues.

The protein belongs to the eukaryotic ribosomal protein eS1 family. Component of the small ribosomal subunit. Mature ribosomes consist of a small (40S) and a large (60S) subunit. The 40S subunit contains about 33 different proteins and 1 molecule of RNA (18S). The 60S subunit contains about 49 different proteins and 3 molecules of RNA (28S, 5.8S and 5S).

Its subcellular location is the cytoplasm. The protein is Small ribosomal subunit protein eS1 of Schistosoma japonicum (Blood fluke).